The following is a 548-amino-acid chain: Acetolactate synthase isozyme 2 large subunit (548 aa).

A thiamine diphosphate-binding site is contributed by Glu-47. FAD-binding positions include Arg-149, 251 to 272, and 294 to 313; these read HGTKAANFAVQECDLLIAVGAR and DIDPAEMNKLRQAHVALQGD. Residues 377–457 are thiamine pyrophosphate binding; the sequence is QHQMWAAQHI…LKIVLLDNQR (81 aa). 2 residues coordinate Mg(2+): Asp-428 and Asn-455.

This sequence belongs to the TPP enzyme family. As to quaternary structure, tetramer of two large (IlvG) and two small (IlvM) chains. FAD is required as a cofactor. Mg(2+) serves as cofactor. The cofactor is thiamine diphosphate.

It carries out the reaction 2 pyruvate + H(+) = (2S)-2-acetolactate + CO2. The protein operates within amino-acid biosynthesis; L-isoleucine biosynthesis; L-isoleucine from 2-oxobutanoate: step 1/4. Its pathway is amino-acid biosynthesis; L-valine biosynthesis; L-valine from pyruvate: step 1/4. Its activity is regulated as follows. Inhibited by the herbicides chlorimuron ethyl, chlorsulfuron and imazapyr. In terms of biological role, catalyzes the first step in the biosynthesis of branched-chain amino acids. The protein is Acetolactate synthase isozyme 2 large subunit (ilvG) of Escherichia coli (strain K12).